Here is a 716-residue protein sequence, read N- to C-terminus: ATP-dependent DNA helicase DinG (716 aa).

Positions 1–114 are HD1 domain N-terminus; sequence MALTAALKAQ…PDLKFTAAFG (114 aa). The region spanning 17–294 is the Helicase ATP-binding domain; that stretch reads ALQEQIPDFI…TCMEQFRPKT (278 aa). ATP is bound by residues isoleucine 26, glutamine 31, lysine 60, and threonine 61. Residues 115–216 form a [4Fe-4S] domain region; that stretch reads RGRYVCPRNL…FFVARREIQE (102 aa). [4Fe-4S] cluster contacts are provided by cysteine 120, cysteine 194, cysteine 199, and cysteine 205. Positions 217 to 261 are HD1 domain middle; the sequence is AEVVVANHALVMAAMESEAVLPDPKNLLLVLDEGHHLPDVARDAL. The DEAH box motif lies at 248–251; it reads DEGH. The segment at 262–438 is arch domain; sequence EMSAEITAPW…LHLWFHCVGI (177 aa). An HD1 domain middle region spans residues 439–491; that stretch reads RVSDQLERLLWRSIPHIIVTSATLRSLNSFSRLQEMSGLKEKAGDRFVALDSP. The interval 492 to 716 is HD2 domain; the sequence is FNHCEQGKIV…KTKSPRRRRR (225 aa). Aspartate 599, arginine 656, and arginine 659 together coordinate ATP.

The protein belongs to the helicase family. DinG subfamily. Type 1 sub-subfamily. In terms of assembly, monomer in solution. [4Fe-4S] cluster is required as a cofactor. The cofactor is Mg(2+).

It catalyses the reaction Couples ATP hydrolysis with the unwinding of duplex DNA at the replication fork by translocating in the 5'-3' direction. This creates two antiparallel DNA single strands (ssDNA). The leading ssDNA polymer is the template for DNA polymerase III holoenzyme which synthesizes a continuous strand.. The enzyme catalyses ATP + H2O = ADP + phosphate + H(+). With respect to regulation, ATPase activity is 15-fold stimulated by single-stranded DNA (ssDNA). Reduction of the [4Fe-4S] cluster reversibly switches off helicase activity. Remains fully active after exposure to 100-fold excess of hydrogen peroxide, but the [4Fe-4S] cluster can be efficiently modified by nitric oxide (NO), forming the DinG-bound dinitrosyl iron complex with the concomitant inactivation of helicase activity. Helicase activity on G-quadruplex DNA is inhibited by porphyrin derivatives meso-tetra (N-methyl-4-pyridyl) porphine tetra tosylate (T4) and N-methyl mesoporphyrin IX (NMM). Helicase activity on forked duplexes is not inhibited by T4 or NMM. G-quadruplex ligands such as Pyridostatin, PhenDC3, BRACO-19 and Netropsin can alter recognition and unwinding of G-quadruplex DNAs; the effect is both ligand- and G-quadruplex DNA-specific. DNA-dependent ATPase and 5'-3' DNA helicase. Can also unwind DNA:RNA hybrid duplexes. Is active on D-loops, R-loops, and on forked structures. Unwinds G-quadruplex DNA in a 5'-3' direction; unwinding efficiency differs on different substrates. Does not appear to unwind replication forks or Holliday junctions. Translocates on single-stranded (ss)DNA with a 5'-3' polarity. In vitro at high concentrations also unwinds in a 3'-5' direction. May be involved in recombinational DNA repair and the resumption of replication after DNA damage. The [4Fe-4S] cluster is redox active at cellular potentials and is involved in DNA-mediated charge-transport signaling between DNA repair proteins from distinct pathways. DinG cooperates at long-range with endonuclease III, a base excision repair enzyme, using DNA charge transport to redistribute to regions of DNA damage. Binds 10-11 nucleotides of ssDNA in a positively-charged groove across the helicase domains. The protein is ATP-dependent DNA helicase DinG of Escherichia coli (strain K12).